The following is a 324-amino-acid chain: Glyoxylate/hydroxypyruvate reductase B (324 aa).

Catalysis depends on residues R237 and E266. The active-site Proton donor is H285.

It belongs to the D-isomer specific 2-hydroxyacid dehydrogenase family. GhrB subfamily. Homodimer.

It localises to the cytoplasm. It carries out the reaction glycolate + NADP(+) = glyoxylate + NADPH + H(+). It catalyses the reaction (R)-glycerate + NAD(+) = 3-hydroxypyruvate + NADH + H(+). The catalysed reaction is (R)-glycerate + NADP(+) = 3-hydroxypyruvate + NADPH + H(+). Functionally, catalyzes the NADPH-dependent reduction of glyoxylate and hydroxypyruvate into glycolate and glycerate, respectively. This is Glyoxylate/hydroxypyruvate reductase B from Shigella dysenteriae serotype 1 (strain Sd197).